Here is a 363-residue protein sequence, read N- to C-terminus: Aminomethyltransferase (363 aa).

It belongs to the GcvT family. In terms of assembly, the glycine cleavage system is composed of four proteins: P, T, L and H.

The enzyme catalyses N(6)-[(R)-S(8)-aminomethyldihydrolipoyl]-L-lysyl-[protein] + (6S)-5,6,7,8-tetrahydrofolate = N(6)-[(R)-dihydrolipoyl]-L-lysyl-[protein] + (6R)-5,10-methylene-5,6,7,8-tetrahydrofolate + NH4(+). Its function is as follows. The glycine cleavage system catalyzes the degradation of glycine. The sequence is that of Aminomethyltransferase from Thermosipho melanesiensis (strain DSM 12029 / CIP 104789 / BI429).